We begin with the raw amino-acid sequence, 172 residues long: Translationally-controlled tumor protein homolog (172 aa).

One can recognise a TCTP domain in the interval 1–172 (MIIFKDLLTG…FKHGLDEEKV (172 aa)).

This sequence belongs to the TCTP family. Expressed by the venom gland.

The protein resides in the secreted. Its function is as follows. Venom protein that causes edema, enhances vascular permeability and is likely related to the inflammatory activity of the venom. The sequence is that of Translationally-controlled tumor protein homolog from Loxosceles intermedia (Brown spider).